Consider the following 409-residue polypeptide: Coagulation factor IX (409 aa).

Positions 1, 2, 7, 8, 16, 18, 21, 22, 27, 28, and 31 each coordinate Ca(2+). In terms of domain architecture, Gla spans tyrosine 1–valine 47. Residues glutamate 7, glutamate 8, glutamate 16, glutamate 18, glutamate 21, glutamate 22, glutamate 27, glutamate 28, glutamate 31, glutamate 34, glutamate 37, and glutamate 41 each carry the 4-carboxyglutamate modification. Mg(2+) is bound at residue glutamate 16. Cysteine 19 and cysteine 24 are joined by a disulfide. Mg(2+) is bound at residue glutamate 21. Glutamate 27 is a Mg(2+) binding site. Glutamate 31 lines the Mg(2+) pocket. Positions 37, 41, 48, 49, and 51 each coordinate Ca(2+). Residues glutamate 37 and glutamate 41 each coordinate Mg(2+). Positions aspartate 48–glutamate 84 constitute an EGF-like 1; calcium-binding domain. Intrachain disulfides connect cysteine 52–cysteine 63, cysteine 57–cysteine 72, cysteine 74–cysteine 83, cysteine 89–cysteine 100, cysteine 96–cysteine 110, cysteine 112–cysteine 125, cysteine 133–cysteine 291, cysteine 208–cysteine 224, cysteine 338–cysteine 352, and cysteine 363–cysteine 391. Aspartate 65 and aspartate 66 together coordinate Ca(2+). Aspartate 65 is modified ((3R)-3-hydroxyaspartate). A Phosphoserine modification is found at serine 69. The EGF-like 2 domain maps to leucine 85–lysine 126. Residues alanine 148–arginine 182 constitute a propeptide, activation peptide. Residue tyrosine 157 is modified to Sulfotyrosine. Serine 160 is subject to Phosphoserine. At threonine 161 the chain carries Phosphothreonine; alternate. Residue threonine 161 is glycosylated (O-linked (GalNAc...) threonine; alternate). O-linked (GalNAc...) threonine glycosylation is present at threonine 171. A glycan (N-linked (GlcNAc...) asparagine) is linked at asparagine 174. The Peptidase S1 domain maps to isoleucine 183 to tryptophan 409. The active-site Charge relay system is histidine 223. Ca(2+) is bound by residues glutamate 237, asparagine 239, glutamate 242, glutamate 244, and glutamate 247. Asparagine 262 carries N-linked (GlcNAc...) asparagine glycosylation. Aspartate 271 functions as the Charge relay system in the catalytic mechanism. The Charge relay system role is filled by serine 367.

This sequence belongs to the peptidase S1 family. In terms of assembly, heterodimer of a light chain and a heavy chain; disulfide-linked. Interacts (inactive and activated) with F11 (activated) in calcium-dependent manner. Interacts with SERPINC1. Activated by factor XIa, which excises the activation peptide. The propeptide can also be removed by snake venom protease. Activated by coagulation factor VIIa-tissue factor (F7-F3) complex in calcium-dependent manner. Post-translationally, the iron and 2-oxoglutarate dependent 3-hydroxylation of aspartate and asparagine is (R) stereospecific within EGF domains.

It is found in the secreted. The enzyme catalyses Selective cleavage of Arg-|-Ile bond in factor X to form factor Xa.. Functionally, factor IX is a vitamin K-dependent plasma protein that participates in the intrinsic pathway of blood coagulation by converting factor X to its active form in the presence of Ca(2+) ions, phospholipids, and factor VIIIa. The polypeptide is Coagulation factor IX (F9) (Sus scrofa (Pig)).